The primary structure comprises 489 residues: Glucose-1-phosphate adenylyltransferase small subunit, chloroplastic/amyloplastic (489 aa).

The N-terminal 52 residues, 1–52 (ITVPSTSSKNLQNSLAFSSSSLSGDKIQTTSFLNRRYCRISSRAPIVVSPKA), are a transit peptide targeting the chloroplast.

Belongs to the bacterial/plant glucose-1-phosphate adenylyltransferase family. Heterotetramer. As to expression, prominently expressed in the leaves. A lower level expression is seen in the roots.

The protein localises to the plastid. Its subcellular location is the chloroplast. It is found in the amyloplast. It catalyses the reaction alpha-D-glucose 1-phosphate + ATP + H(+) = ADP-alpha-D-glucose + diphosphate. It functions in the pathway glycan biosynthesis; starch biosynthesis. Its activity is regulated as follows. Activated by 3'phosphoglycerate, inhibited by orthophosphate. Allosteric regulation. Functionally, this protein plays a role in synthesis of starch. It catalyzes the synthesis of the activated glycosyl donor, ADP-glucose from Glc-1-P and ATP. In Beta vulgaris (Sugar beet), this protein is Glucose-1-phosphate adenylyltransferase small subunit, chloroplastic/amyloplastic (AGPB1).